A 540-amino-acid chain; its full sequence is Alanine aminotransferase 2 (540 aa).

An N6-(pyridoxal phosphate)lysine modification is found at K358.

Belongs to the class-I pyridoxal-phosphate-dependent aminotransferase family. Alanine aminotransferase subfamily. Homodimer. Pyridoxal 5'-phosphate serves as cofactor.

The enzyme catalyses L-alanine + 2-oxoglutarate = pyruvate + L-glutamate. Its pathway is amino-acid degradation; L-alanine degradation via transaminase pathway; pyruvate from L-alanine: step 1/1. Catalyzes the reversible transamination between alanine and 2-oxoglutarate to form pyruvate and glutamate. The protein is Alanine aminotransferase 2 (gpt2) of Xenopus laevis (African clawed frog).